Here is a 209-residue protein sequence, read N- to C-terminus: COP9 signalosome complex subunit 8 (209 aa).

In terms of domain architecture, PCI spans 8 to 179 (ESAFSFKKLL…GALDVSFNKF (172 aa)). Phosphoserine is present on S175.

This sequence belongs to the CSN8 family. As to quaternary structure, component of the CSN complex, composed of COPS1/GPS1, COPS2, COPS3, COPS4, COPS5, COPS6, COPS7 (COPS7A or COPS7B), COPS8 and COPS9 isoform 1. In the complex, it probably interacts directly with COPS3, COPS4 and COPS7 (COPS7A or COPS7B).

The protein resides in the cytoplasm. Its subcellular location is the nucleus. Functionally, component of the COP9 signalosome complex (CSN), a complex involved in various cellular and developmental processes. The CSN complex is an essential regulator of the ubiquitin (Ubl) conjugation pathway by mediating the deneddylation of the cullin subunits of SCF-type E3 ligase complexes, leading to decrease the Ubl ligase activity of SCF-type complexes such as SCF, CSA or DDB2. The complex is also involved in phosphorylation of p53/TP53, c-jun/JUN, IkappaBalpha/NFKBIA, ITPK1 and IRF8/ICSBP, possibly via its association with CK2 and PKD kinases. CSN-dependent phosphorylation of TP53 and JUN promotes and protects degradation by the Ubl system, respectively. This is COP9 signalosome complex subunit 8 (COPS8) from Homo sapiens (Human).